The chain runs to 1213 residues: DNA-directed RNA polymerase subunit beta' (1213 aa).

Zn(2+)-binding residues include C60, C62, C75, and C78. Positions 450, 452, and 454 each coordinate Mg(2+). Positions 819, 893, 900, and 903 each coordinate Zn(2+).

It belongs to the RNA polymerase beta' chain family. In terms of assembly, the RNAP catalytic core consists of 2 alpha, 1 beta, 1 beta' and 1 omega subunit. When a sigma factor is associated with the core the holoenzyme is formed, which can initiate transcription. Requires Mg(2+) as cofactor. It depends on Zn(2+) as a cofactor.

It catalyses the reaction RNA(n) + a ribonucleoside 5'-triphosphate = RNA(n+1) + diphosphate. DNA-dependent RNA polymerase catalyzes the transcription of DNA into RNA using the four ribonucleoside triphosphates as substrates. In Streptococcus pyogenes serotype M1, this protein is DNA-directed RNA polymerase subunit beta'.